The primary structure comprises 767 residues: Phosphoribosylformylglycinamidine synthase subunit PurL (767 aa).

The active site involves His65. ATP-binding residues include Tyr68 and Lys112. Residue Glu114 coordinates Mg(2+). Residues 115-118 (SHNH) and Arg137 each bind substrate. His116 serves as the catalytic Proton acceptor. Mg(2+) is bound at residue Asp138. Gln262 is a substrate binding site. Asp290 provides a ligand contact to Mg(2+). 334 to 336 (ESQ) provides a ligand contact to substrate. ATP is bound by residues Asp522 and Gly559. A Mg(2+)-binding site is contributed by Asn560. Ser562 serves as a coordination point for substrate.

It belongs to the FGAMS family. Monomer. Part of the FGAM synthase complex composed of 1 PurL, 1 PurQ and 2 PurS subunits.

Its subcellular location is the cytoplasm. It carries out the reaction N(2)-formyl-N(1)-(5-phospho-beta-D-ribosyl)glycinamide + L-glutamine + ATP + H2O = 2-formamido-N(1)-(5-O-phospho-beta-D-ribosyl)acetamidine + L-glutamate + ADP + phosphate + H(+). It participates in purine metabolism; IMP biosynthesis via de novo pathway; 5-amino-1-(5-phospho-D-ribosyl)imidazole from N(2)-formyl-N(1)-(5-phospho-D-ribosyl)glycinamide: step 1/2. In terms of biological role, part of the phosphoribosylformylglycinamidine synthase complex involved in the purines biosynthetic pathway. Catalyzes the ATP-dependent conversion of formylglycinamide ribonucleotide (FGAR) and glutamine to yield formylglycinamidine ribonucleotide (FGAM) and glutamate. The FGAM synthase complex is composed of three subunits. PurQ produces an ammonia molecule by converting glutamine to glutamate. PurL transfers the ammonia molecule to FGAR to form FGAM in an ATP-dependent manner. PurS interacts with PurQ and PurL and is thought to assist in the transfer of the ammonia molecule from PurQ to PurL. The sequence is that of Phosphoribosylformylglycinamidine synthase subunit PurL from Renibacterium salmoninarum (strain ATCC 33209 / DSM 20767 / JCM 11484 / NBRC 15589 / NCIMB 2235).